The primary structure comprises 627 residues: Phosphomethylpyrimidine synthase (627 aa).

The segment covering 1–24 has biased composition (polar residues); sequence MSATQKNNITRLEQLDRQSTQPFP. The interval 1–29 is disordered; sequence MSATQKNNITRLEQLDRQSTQPFPNSRKV. Residues Asn-231, Met-260, Tyr-289, His-325, 345–347, 386–389, and Glu-425 each bind substrate; these read SRG and DGLR. His-429 lines the Zn(2+) pocket. Substrate is bound at residue Tyr-452. Zn(2+) is bound at residue His-493. 3 residues coordinate [4Fe-4S] cluster: Cys-573, Cys-576, and Cys-581.

The protein belongs to the ThiC family. Homodimer. [4Fe-4S] cluster is required as a cofactor.

The enzyme catalyses 5-amino-1-(5-phospho-beta-D-ribosyl)imidazole + S-adenosyl-L-methionine = 4-amino-2-methyl-5-(phosphooxymethyl)pyrimidine + CO + 5'-deoxyadenosine + formate + L-methionine + 3 H(+). It functions in the pathway cofactor biosynthesis; thiamine diphosphate biosynthesis. Functionally, catalyzes the synthesis of the hydroxymethylpyrimidine phosphate (HMP-P) moiety of thiamine from aminoimidazole ribotide (AIR) in a radical S-adenosyl-L-methionine (SAM)-dependent reaction. In Pseudomonas paraeruginosa (strain DSM 24068 / PA7) (Pseudomonas aeruginosa (strain PA7)), this protein is Phosphomethylpyrimidine synthase.